The sequence spans 1237 residues: Zinc finger protein 687 (1237 aa).

Disordered regions lie at residues 1–80 and 96–330; these read MGDM…PDIS and EALA…PLKV. Residues 97-111 show a composition bias toward low complexity; that stretch reads ALAGGSAGDGAQAAG. Phosphoserine occurs at positions 102, 129, and 140. The span at 132 to 144 shows a compositional bias: pro residues; that stretch reads PSLPGTPHSPAPP. Threonine 148 carries the phosphothreonine modification. Serine 227, serine 242, serine 251, serine 253, serine 266, and serine 271 each carry phosphoserine. Positions 234–244 are enriched in polar residues; it reads LAQQGSGSSPK. Residue lysine 285 forms a Glycyl lysine isopeptide (Lys-Gly) (interchain with G-Cter in SUMO2) linkage. Residues 297-310 show a composition bias toward low complexity; that stretch reads SSPGSPQSPSSGAE. Glycyl lysine isopeptide (Lys-Gly) (interchain with G-Cter in SUMO2) cross-links involve residues lysine 336 and lysine 372. Serine 374 is subject to Phosphoserine. The residue at position 377 (threonine 377) is a Phosphothreonine. Glycyl lysine isopeptide (Lys-Gly) (interchain with G-Cter in SUMO2) cross-links involve residues lysine 384, lysine 397, and lysine 422. A Phosphoserine modification is found at serine 433. Residues lysine 435, lysine 439, lysine 451, and lysine 464 each participate in a glycyl lysine isopeptide (Lys-Gly) (interchain with G-Cter in SUMO2) cross-link. Serine 495 carries the post-translational modification Phosphoserine. A C2H2-type 1; degenerate zinc finger spans residues 533 to 552; sequence YRCLECGDAFSLEKSLARHY. 5 consecutive C2H2-type zinc fingers follow at residues 705–727, 764–787, 792–815, 827–849, and 858–881; these read NVCP…QRMH, YRCP…QTSH, HKCP…YSQH, YKCA…FDQH, and FKCP…KNTH. Positions 880-890 are enriched in basic and acidic residues; that stretch reads THQSGRLEETA. Positions 880 to 957 are disordered; the sequence is THQSGRLEET…LGSKGLKGGG (78 aa). Phosphothreonine is present on threonine 900. Residues 915–925 are compositionally biased toward low complexity; it reads AAPATEESSSS. Lysine 954 is covalently cross-linked (Glycyl lysine isopeptide (Lys-Gly) (interchain with G-Cter in SUMO2)). 2 consecutive C2H2-type zinc fingers follow at residues 963 to 986 and 993 to 1016; these read WTCG…KKEH and FPCR…RVNH. A Glycyl lysine isopeptide (Lys-Gly) (interchain with G-Cter in SUMO2) cross-link involves residue lysine 1043. The interval 1051-1121 is disordered; the sequence is LQLGAQSPGR…LRYRSSSSTE (71 aa). At serine 1057 the chain carries Phosphoserine. Arginine 1060 is modified (omega-N-methylarginine). Serine 1082, serine 1083, and serine 1085 each carry phosphoserine. Arginine 1101 is subject to Omega-N-methylarginine. Residues serine 1106 and serine 1118 each carry the phosphoserine modification. The C2H2-type 9 zinc-finger motif lies at 1135 to 1158; it reads QQCLDCGLCFASPGSLSRHRFISH. A disordered region spans residues 1159–1195; that stretch reads KKRRGVGKASALGLGDGEEEAPPSRSDPDGGDSPLPA. Residues serine 1184, serine 1191, and serine 1211 each carry the phosphoserine modification. The segment at 1200–1222 adopts a C2H2-type 10 zinc-finger fold; the sequence is LTCKVCGKSCDSPLNLKTHFRTH.

This sequence belongs to the krueppel C2H2-type zinc-finger protein family. As to quaternary structure, interacts with ZMYND8. As to expression, widely expressed with highest levels in obvary, muscle, blood and lung.

The protein resides in the cytoplasm. It localises to the nucleus. Its function is as follows. May be involved in transcriptional regulation. This chain is Zinc finger protein 687 (ZNF687), found in Homo sapiens (Human).